The following is a 291-amino-acid chain: MMRILLFLATNLAVLVIASITLKLLGVDRFTGQNYGSLLVFCAVFGFAGSLVSLFISKWMAKMSTGTEVISQPRTRHEQWLLQTVEELSREAGIKMPEVGIFPAYEANAFATGWNKNDALVAVSQGLLERFSPDEVKAVLAHEIGHVANGDMVTLALIQGVVNTFVMFFARIFGNFVDKAILKNEDGPGIGYFVATIFAELVLGILASIIVMWFSRRREFRADAAGAHLAGTGAMIAALQRLRSEQGVPVQMPDTLNAFGINGGLKHGLAGLLMSHPPLEDRIEALRASAR.

The next 2 helical transmembrane spans lie at 4 to 24 (ILLFLATNLAVLVIASITLKL) and 36 to 56 (GSLLVFCAVFGFAGSLVSLFI). Histidine 142 lines the Zn(2+) pocket. The active site involves glutamate 143. Histidine 146 contacts Zn(2+). A run of 2 helical transmembrane segments spans residues 150–170 (GDMVTLALIQGVVNTFVMFFA) and 193–213 (FVATIFAELVLGILASIIVMW). Glutamate 219 provides a ligand contact to Zn(2+).

It belongs to the peptidase M48B family. It depends on Zn(2+) as a cofactor.

It localises to the cell inner membrane. This Pseudomonas aeruginosa (strain LESB58) protein is Protease HtpX.